The primary structure comprises 115 residues: MWDPLLNEFPDSVHGLRCMLAIKYLQLVEETYEPNTLGHDLIRDLISVIRARDYAEANRRYTNFNARLEGSSKTELRQPVYQPCCCPHCPRHQASIMDLQAHVSKAADVQNVQKP.

The protein belongs to the geminiviridae protein AV2/V2 family. In terms of assembly, interacts with host SGS3.

It is found in the host cytoplasm. Its subcellular location is the host perinuclear region. In terms of biological role, through its interaction with host SGS3, acts as a suppressor of RNA-mediated gene silencing, also known as post-transcriptional gene silencing (PTGS), a mechanism of plant viral defense that limits the accumulation of viral RNAs. The protein is Protein V2 of Tomato yellow leaf curl Sardinia virus (TYLCSV).